The chain runs to 195 residues: ATP-dependent Clp protease proteolytic subunit (195 aa).

Catalysis depends on Ser102, which acts as the Nucleophile. The active site involves His125.

It belongs to the peptidase S14 family. Component of the chloroplastic Clp protease core complex.

The protein localises to the plastid. Its subcellular location is the chloroplast stroma. It carries out the reaction Hydrolysis of proteins to small peptides in the presence of ATP and magnesium. alpha-casein is the usual test substrate. In the absence of ATP, only oligopeptides shorter than five residues are hydrolyzed (such as succinyl-Leu-Tyr-|-NHMec, and Leu-Tyr-Leu-|-Tyr-Trp, in which cleavage of the -Tyr-|-Leu- and -Tyr-|-Trp bonds also occurs).. Its function is as follows. Cleaves peptides in various proteins in a process that requires ATP hydrolysis. Has a chymotrypsin-like activity. Plays a major role in the degradation of misfolded proteins. In Phaseolus vulgaris (Kidney bean), this protein is ATP-dependent Clp protease proteolytic subunit.